We begin with the raw amino-acid sequence, 632 residues long: 1-deoxy-D-xylulose-5-phosphate synthase (632 aa).

Thiamine diphosphate is bound by residues His-77 and 118-120; that span reads GHA. A Mg(2+)-binding site is contributed by Asp-149. Residues 150-151, Asn-178, Phe-287, and Glu-372 each bind thiamine diphosphate; that span reads GS. Asn-178 provides a ligand contact to Mg(2+).

Belongs to the transketolase family. DXPS subfamily. In terms of assembly, homodimer. Requires Mg(2+) as cofactor. It depends on thiamine diphosphate as a cofactor.

The catalysed reaction is D-glyceraldehyde 3-phosphate + pyruvate + H(+) = 1-deoxy-D-xylulose 5-phosphate + CO2. It functions in the pathway metabolic intermediate biosynthesis; 1-deoxy-D-xylulose 5-phosphate biosynthesis; 1-deoxy-D-xylulose 5-phosphate from D-glyceraldehyde 3-phosphate and pyruvate: step 1/1. In terms of biological role, catalyzes the acyloin condensation reaction between C atoms 2 and 3 of pyruvate and glyceraldehyde 3-phosphate to yield 1-deoxy-D-xylulose-5-phosphate (DXP). The chain is 1-deoxy-D-xylulose-5-phosphate synthase from Chlorobium luteolum (strain DSM 273 / BCRC 81028 / 2530) (Pelodictyon luteolum).